The chain runs to 377 residues: Signal peptide peptidase (377 aa).

The tract at residues 1–27 (MDSALSDPHNGSAEAGGPTNSTTRPPS) is disordered. The Lumenal segment spans residues 1-31 (MDSALSDPHNGSAEAGGPTNSTTRPPSTPEG). N-linked (GlcNAc...) asparagine glycosylation is found at Asn-10 and Asn-20. The helical transmembrane segment at 32-52 (IALAYGSLLLMALLPIFFGAL) threads the bilayer. Residues 53 to 77 (RSVRCARGKNASDMPETITSRDAAR) are Cytoplasmic-facing. Residues 78–98 (FPIIASCTLLGLYLFFKIFSQ) form a helical membrane-spanning segment. The Lumenal segment spans residues 99–100 (EY). The chain crosses the membrane as a helical span at residues 101-121 (INLLLSMYFFVLGILALSHTI). Residues 122 to 157 (SPFMNKFFPASFPNRQYQLLFTQGSGENKEEIINYE) lie on the Cytoplasmic side of the membrane. Residues 158-178 (FDTKDLVCLGLSSIVGVWYLL) form a helical membrane-spanning segment. The Lumenal segment spans residues 179-181 (RKH). Residues 182 to 202 (WIANNLFGLAFSLNGVELLHL) form a helical membrane-spanning segment. The Cytoplasmic segment spans residues 203–209 (NNVSTGC). A helical membrane pass occupies residues 210 to 230 (ILLGGLFIYDVFWVFGTNVMV). The active site involves Asp-219. Residues 231–256 (TVAKSFEAPIKLVFPQDLLEKGLEAN) lie on the Lumenal side of the membrane. Residues 257–277 (NFAMLGLGDVVIPGIFIALLL) form a helical membrane-spanning segment. Asp-265 is a catalytic residue. Topologically, residues 278 to 290 (RFDISLKKNTHTY) are cytoplasmic. A helical membrane pass occupies residues 291 to 311 (FYTSFAAYIFGLGLTIFIMHI). Residues 312–314 (FKH) lie on the Lumenal side of the membrane. The helical transmembrane segment at 315–335 (AQPALLYLVPACIGFPVLVAL) threads the bilayer. The PAL signature appears at 317-319 (PAL). Residues 336 to 377 (AKGEVTEMFSYEESNPKDPAAVTESKEGTEASASKGLEKKEK) are Cytoplasmic-facing. The segment at 345–377 (SYEESNPKDPAAVTESKEGTEASASKGLEKKEK) is disordered. A Phosphoserine modification is found at Ser-367.

It belongs to the peptidase A22B family. As to quaternary structure, monomer. Homodimer. Interacts with RNF139. Interacts with DERL1 and XBP1 isoform 1. In terms of processing, N-glycosylated. In terms of tissue distribution, widely expressed with highest levels in kidney, liver, placenta, lung, leukocytes and small intestine and reduced expression in heart and skeletal muscle. Expressed abundantly in the CNS with highest levels in thalamus and medulla.

Its subcellular location is the endoplasmic reticulum membrane. The protein localises to the membrane. It localises to the cell membrane. Catalyzes intramembrane proteolysis of signal peptides that have been removed from precursors of secretory and membrane proteins, resulting in the release of the fragment from the ER membrane into the cytoplasm. Required to generate lymphocyte cell surface (HLA-E) epitopes derived from MHC class I signal peptides. May be necessary for the removal of the signal peptide that remains attached to the hepatitis C virus core protein after the initial proteolytic processing of the polyprotein. Involved in the intramembrane cleavage of the integral membrane protein PSEN1. Cleaves the integral membrane protein XBP1 isoform 1 in a DERL1/RNF139-dependent manner. May play a role in graft rejection. This chain is Signal peptide peptidase, found in Homo sapiens (Human).